The chain runs to 144 residues: Small ribosomal subunit protein eS12y (144 aa).

S2 is modified (N-acetylserine).

This sequence belongs to the eukaryotic ribosomal protein eS12 family.

The polypeptide is Small ribosomal subunit protein eS12y (RPS12C) (Arabidopsis thaliana (Mouse-ear cress)).